The chain runs to 210 residues: Ribosomal RNA large subunit methyltransferase E (210 aa).

Positions 55, 57, 75, 93, and 117 each coordinate S-adenosyl-L-methionine. Catalysis depends on Lys-157, which acts as the Proton acceptor. Residues 175-210 form a disordered region; the sequence is YRQVKTTKPPSSRKKSSEMYVVGLDFKPKKNKKSKD.

It belongs to the class I-like SAM-binding methyltransferase superfamily. RNA methyltransferase RlmE family.

It is found in the cytoplasm. It catalyses the reaction uridine(2552) in 23S rRNA + S-adenosyl-L-methionine = 2'-O-methyluridine(2552) in 23S rRNA + S-adenosyl-L-homocysteine + H(+). In terms of biological role, specifically methylates the uridine in position 2552 of 23S rRNA at the 2'-O position of the ribose in the fully assembled 50S ribosomal subunit. The polypeptide is Ribosomal RNA large subunit methyltransferase E (Methanobrevibacter smithii (strain ATCC 35061 / DSM 861 / OCM 144 / PS)).